A 189-amino-acid polypeptide reads, in one-letter code: Threonylcarbamoyl-AMP synthase (189 aa).

The region spanning 7-189 (NPRVNYAANM…LLTGQVVRPS (183 aa)) is the YrdC-like domain.

The protein belongs to the SUA5 family. TsaC subfamily.

The protein resides in the cytoplasm. It carries out the reaction L-threonine + hydrogencarbonate + ATP = L-threonylcarbamoyladenylate + diphosphate + H2O. Its function is as follows. Required for the formation of a threonylcarbamoyl group on adenosine at position 37 (t(6)A37) in tRNAs that read codons beginning with adenine. Catalyzes the conversion of L-threonine, HCO(3)(-)/CO(2) and ATP to give threonylcarbamoyl-AMP (TC-AMP) as the acyladenylate intermediate, with the release of diphosphate. This is Threonylcarbamoyl-AMP synthase from Cellvibrio japonicus (strain Ueda107) (Pseudomonas fluorescens subsp. cellulosa).